Consider the following 413-residue polypeptide: Serine hydroxymethyltransferase (413 aa).

(6S)-5,6,7,8-tetrahydrofolate-binding positions include Leu119 and 123 to 125 (GHL). At Lys228 the chain carries N6-(pyridoxal phosphate)lysine. Residue 351–353 (SPF) participates in (6S)-5,6,7,8-tetrahydrofolate binding.

This sequence belongs to the SHMT family. Homodimer. Requires pyridoxal 5'-phosphate as cofactor.

It is found in the cytoplasm. It catalyses the reaction (6R)-5,10-methylene-5,6,7,8-tetrahydrofolate + glycine + H2O = (6S)-5,6,7,8-tetrahydrofolate + L-serine. Its pathway is one-carbon metabolism; tetrahydrofolate interconversion. It functions in the pathway amino-acid biosynthesis; glycine biosynthesis; glycine from L-serine: step 1/1. Its function is as follows. Catalyzes the reversible interconversion of serine and glycine with tetrahydrofolate (THF) serving as the one-carbon carrier. This reaction serves as the major source of one-carbon groups required for the biosynthesis of purines, thymidylate, methionine, and other important biomolecules. Also exhibits THF-independent aldolase activity toward beta-hydroxyamino acids, producing glycine and aldehydes, via a retro-aldol mechanism. The polypeptide is Serine hydroxymethyltransferase (Clostridium botulinum (strain Langeland / NCTC 10281 / Type F)).